The sequence spans 399 residues: Succinate--CoA ligase [ADP-forming] subunit beta (399 aa).

The ATP-grasp domain maps to 9-254 (KALLREFGVP…ESEEDAKEIE (246 aa)). ATP is bound by residues K46, 53–55 (GRG), E109, S112, and E117. Residues N209 and D223 each coordinate Mg(2+). Substrate is bound by residues N274 and 331 to 333 (GIM).

This sequence belongs to the succinate/malate CoA ligase beta subunit family. Heterotetramer of two alpha and two beta subunits. Mg(2+) is required as a cofactor.

The enzyme catalyses succinate + ATP + CoA = succinyl-CoA + ADP + phosphate. The catalysed reaction is GTP + succinate + CoA = succinyl-CoA + GDP + phosphate. It functions in the pathway carbohydrate metabolism; tricarboxylic acid cycle; succinate from succinyl-CoA (ligase route): step 1/1. Functionally, succinyl-CoA synthetase functions in the citric acid cycle (TCA), coupling the hydrolysis of succinyl-CoA to the synthesis of either ATP or GTP and thus represents the only step of substrate-level phosphorylation in the TCA. The beta subunit provides nucleotide specificity of the enzyme and binds the substrate succinate, while the binding sites for coenzyme A and phosphate are found in the alpha subunit. This is Succinate--CoA ligase [ADP-forming] subunit beta from Nitrobacter winogradskyi (strain ATCC 25391 / DSM 10237 / CIP 104748 / NCIMB 11846 / Nb-255).